Here is a 347-residue protein sequence, read N- to C-terminus: Heme A synthase (347 aa).

8 helical membrane-spanning segments follow: residues 14 to 34 (VKIW…IGGI), 96 to 116 (FHRL…LYFM), 129 to 149 (FILI…MVKS), 162 to 182 (LAMH…HFLL), 199 to 219 (VFYI…LVAG), 260 to 280 (FIHE…LLVL), 287 to 307 (MYLL…TFIY), and 311 to 331 (IILA…SIYL). Heme is bound at residue H262. Residue H317 participates in heme binding.

This sequence belongs to the COX15/CtaA family. Type 2 subfamily. Interacts with CtaB. Heme b is required as a cofactor.

It is found in the cell membrane. The catalysed reaction is Fe(II)-heme o + 2 A + H2O = Fe(II)-heme a + 2 AH2. It participates in porphyrin-containing compound metabolism; heme A biosynthesis; heme A from heme O: step 1/1. Its function is as follows. Catalyzes the conversion of heme O to heme A by two successive hydroxylations of the methyl group at C8. The first hydroxylation forms heme I, the second hydroxylation results in an unstable dihydroxymethyl group, which spontaneously dehydrates, resulting in the formyl group of heme A. This chain is Heme A synthase, found in Ehrlichia ruminantium (strain Gardel).